The primary structure comprises 205 residues: Phosphoserine phosphatase ThrH (205 aa).

D7 acts as the Nucleophile in catalysis. 2 residues coordinate Mg(2+): D7 and E9. Catalysis depends on E9, which acts as the Proton donor. Substrate contacts are provided by residues E15, R46, 90-91, and K133; that span reads SD. D152 contacts Mg(2+). A substrate-binding site is contributed by N155.

It belongs to the thrH family. Requires Mg(2+) as cofactor.

The catalysed reaction is O-phospho-L-serine + H2O = L-serine + phosphate. It carries out the reaction O-phospho-D-serine + H2O = D-serine + phosphate. It functions in the pathway amino-acid biosynthesis; L-serine biosynthesis; L-serine from 3-phospho-D-glycerate: step 3/3. Phosphoserine phosphatase that mediates dephosphorylation of phosphoserine in the serine biosynthesis pathway. Also able to dephosphorylate other substrates such as phospho-L(or D)-threonine, with lower activity. Shows phosphoserine:homoserine phosphotransferase activity by transferring the phosphoryl group to homoserine using phosphoserine as the phosphoryl group donor. This chain is Phosphoserine phosphatase ThrH (thrH), found in Pseudomonas aeruginosa (strain ATCC 15692 / DSM 22644 / CIP 104116 / JCM 14847 / LMG 12228 / 1C / PRS 101 / PAO1).